The chain runs to 516 residues: GMP synthase [glutamine-hydrolyzing] (516 aa).

In terms of domain architecture, Glutamine amidotransferase type-1 spans 7–199; the sequence is KIIILDFGSQ…VFGLCKCQAT (193 aa). Cysteine 84 acts as the Nucleophile in catalysis. Active-site residues include histidine 173 and glutamate 175. Residues 200–391 form the GMPS ATP-PPase domain; that stretch reads WTMQGFIESN…LGLPDEAVHR (192 aa). ATP is bound at residue 227–233; sequence SGGVDSS.

Homodimer.

The enzyme catalyses XMP + L-glutamine + ATP + H2O = GMP + L-glutamate + AMP + diphosphate + 2 H(+). It functions in the pathway purine metabolism; GMP biosynthesis; GMP from XMP (L-Gln route): step 1/1. Its function is as follows. Catalyzes the synthesis of GMP from XMP. The polypeptide is GMP synthase [glutamine-hydrolyzing] (Desulfotalea psychrophila (strain LSv54 / DSM 12343)).